The sequence spans 217 residues: Uracil-DNA glycosylase (217 aa).

Catalysis depends on Asp62, which acts as the Proton acceptor.

The protein belongs to the uracil-DNA glycosylase (UDG) superfamily. UNG family.

It is found in the cytoplasm. It catalyses the reaction Hydrolyzes single-stranded DNA or mismatched double-stranded DNA and polynucleotides, releasing free uracil.. Its function is as follows. Excises uracil residues from the DNA which can arise as a result of misincorporation of dUMP residues by DNA polymerase or due to deamination of cytosine. The chain is Uracil-DNA glycosylase from Streptococcus pyogenes serotype M18 (strain MGAS8232).